The primary structure comprises 100 residues: Co-chaperonin GroES (100 aa).

It belongs to the GroES chaperonin family. As to quaternary structure, heptamer of 7 subunits arranged in a ring. Interacts with the chaperonin GroEL.

It localises to the cytoplasm. Together with the chaperonin GroEL, plays an essential role in assisting protein folding. The GroEL-GroES system forms a nano-cage that allows encapsulation of the non-native substrate proteins and provides a physical environment optimized to promote and accelerate protein folding. GroES binds to the apical surface of the GroEL ring, thereby capping the opening of the GroEL channel. In Mycolicibacterium smegmatis (strain ATCC 700084 / mc(2)155) (Mycobacterium smegmatis), this protein is Co-chaperonin GroES.